Here is a 319-residue protein sequence, read N- to C-terminus: Acetyl-coenzyme A carboxylase carboxyl transferase subunit alpha (319 aa).

The region spanning 38–292 is the CoA carboxyltransferase C-terminal domain; the sequence is ALDKKAETLL…GKAIEMMLKE (255 aa).

This sequence belongs to the AccA family. As to quaternary structure, acetyl-CoA carboxylase is a heterohexamer composed of biotin carboxyl carrier protein (AccB), biotin carboxylase (AccC) and two subunits each of ACCase subunit alpha (AccA) and ACCase subunit beta (AccD).

It is found in the cytoplasm. The enzyme catalyses N(6)-carboxybiotinyl-L-lysyl-[protein] + acetyl-CoA = N(6)-biotinyl-L-lysyl-[protein] + malonyl-CoA. The protein operates within lipid metabolism; malonyl-CoA biosynthesis; malonyl-CoA from acetyl-CoA: step 1/1. Functionally, component of the acetyl coenzyme A carboxylase (ACC) complex. First, biotin carboxylase catalyzes the carboxylation of biotin on its carrier protein (BCCP) and then the CO(2) group is transferred by the carboxyltransferase to acetyl-CoA to form malonyl-CoA. This chain is Acetyl-coenzyme A carboxylase carboxyl transferase subunit alpha, found in Cereibacter sphaeroides (strain ATCC 17029 / ATH 2.4.9) (Rhodobacter sphaeroides).